Consider the following 61-residue polypeptide: Tryptophyllin-T1 (61 aa).

A signal peptide spans 1-22 (MDFLKKSLFLVLFLGLVSISLC). Positions 23 to 53 (DEEKRQDDDEASEREEKKEIHEEGNQEERRD) are excised as a propeptide. Positions 25 to 61 (EKRQDDDEASEREEKKEIHEEGNQEERRDRPPSWIPK) are disordered. The segment covering 36 to 55 (REEKKEIHEEGNQEERRDRP) has biased composition (basic and acidic residues). Position 56 is a 4-hydroxyproline; partial (Pro56).

It belongs to the frog skin active peptide (FSAP) family. Tryptophillin subfamily. As to expression, expressed by the skin glands.

Its subcellular location is the secreted. The protein is Tryptophyllin-T1 of Pithecopus azureus (Orange-legged monkey tree frog).